The sequence spans 762 residues: Putative BTB/POZ domain-containing protein L272 (762 aa).

One can recognise a BTB domain in the interval 16 to 86; it reads TDITIILKDE…FYGQKIKSHN (71 aa). Residues 390 to 410 show a composition bias toward acidic residues; that stretch reads DLDNSNDLNDSNDLDDSDDSN. 2 disordered regions span residues 390–411 and 532–556; these read DLDNSNDLNDSNDLDDSDDSND and ISDNSDNLNNSDNSDDLDNPDNSDN. Positions 532-543 are enriched in low complexity; that stretch reads ISDNSDNLNNSD. Residues 737-762 are a coiled coil; that stretch reads FSENYCDELINRLNNALKKIEQKYPN.

This sequence belongs to the mimivirus BTB/WD family.

The protein is Putative BTB/POZ domain-containing protein L272 of Acanthamoeba polyphaga (Amoeba).